Consider the following 468-residue polypeptide: Probable xyloglucan galactosyltransferase GT13 (468 aa).

Over 1-18 (MDKFNPKKEKTVKKRALK) the chain is Cytoplasmic. Residues 19 to 35 (VLTEISPTPLFSMLFLL) traverse the membrane as a helical; Signal-anchor for type II membrane protein segment. Residues 36 to 468 (HISQIATYLS…RVSLFKMTRI (433 aa)) are Lumenal-facing. Residues Asn53, Asn116, Asn153, Asn240, and Asn412 are each glycosylated (N-linked (GlcNAc...) asparagine).

The protein belongs to the glycosyltransferase 47 family. In terms of tissue distribution, expressed in roots, hypocotyls, cotyledons, leaves, stems, petals and carpels.

The protein resides in the golgi apparatus membrane. Functions in xyloglucan synthesis by adding side chains to the xylosylated glucan backbone. Involved in the galactosylation of hemicellulose xyloglucan. This chain is Probable xyloglucan galactosyltransferase GT13, found in Arabidopsis thaliana (Mouse-ear cress).